A 184-amino-acid chain; its full sequence is Protein GrpE (184 aa).

Over residues 1-14 (MANEQNEQSQDLSS) the composition is skewed to polar residues. Residues 1 to 35 (MANEQNEQSQDLSSEQTTQDHEQTQTEGVEQGAEI) form a disordered region.

The protein belongs to the GrpE family. In terms of assembly, homodimer.

It localises to the cytoplasm. Participates actively in the response to hyperosmotic and heat shock by preventing the aggregation of stress-denatured proteins, in association with DnaK and GrpE. It is the nucleotide exchange factor for DnaK and may function as a thermosensor. Unfolded proteins bind initially to DnaJ; upon interaction with the DnaJ-bound protein, DnaK hydrolyzes its bound ATP, resulting in the formation of a stable complex. GrpE releases ADP from DnaK; ATP binding to DnaK triggers the release of the substrate protein, thus completing the reaction cycle. Several rounds of ATP-dependent interactions between DnaJ, DnaK and GrpE are required for fully efficient folding. The sequence is that of Protein GrpE from Acinetobacter baylyi (strain ATCC 33305 / BD413 / ADP1).